Consider the following 70-residue polypeptide: Putative membrane protein insertion efficiency factor (70 aa).

The protein belongs to the UPF0161 family.

Its subcellular location is the cell membrane. Functionally, could be involved in insertion of integral membrane proteins into the membrane. This is Putative membrane protein insertion efficiency factor from Chloroflexus aurantiacus (strain ATCC 29366 / DSM 635 / J-10-fl).